A 533-amino-acid chain; its full sequence is Probable anion transporter 4, chloroplastic (533 aa).

A run of 12 helical transmembrane segments spans residues 117-137 (MLALALALCNADRVVMSVAIV), 152-172 (IVQSSFLWGYLISPIAGGTLV), 179-199 (VVMAWGVALWSLATFLTPWAA), 203-223 (LWALLAARAMVGVAEGVALPC), 243-263 (IAMAGFQLGNVVGLMLSPILM), 267-287 (GIYGPFVIFGLSGFLWLLVWL), 342-362 (VIVANSMHSWGFFVILSWMPI), 376-396 (AWFSAVPWSMMAFTGYIAGFW), 417-437 (IGFIGPGIALIGLTTAKQPLV), 438-458 (ASAWLSLAVGLKSFSHLGFLI), 474-494 (MCLTAGTLAAIVGTVGAGFFV), and 502-522 (GFILLTAILYLLSALFYNIYA).

This sequence belongs to the major facilitator superfamily. Sodium/anion cotransporter (TC 2.A.1.14) family. In terms of tissue distribution, expressed in leaf veins and root tips.

The protein resides in the plastid. It is found in the chloroplast membrane. Inorganic phosphate and probable anion transporter. In Arabidopsis thaliana (Mouse-ear cress), this protein is Probable anion transporter 4, chloroplastic (ANTR4).